We begin with the raw amino-acid sequence, 67 residues long: Large ribosomal subunit protein bL35 (67 aa).

Belongs to the bacterial ribosomal protein bL35 family.

The polypeptide is Large ribosomal subunit protein bL35 (Brachyspira hyodysenteriae (strain ATCC 49526 / WA1)).